Reading from the N-terminus, the 116-residue chain is Large ribosomal subunit protein eL18 (116 aa).

This sequence belongs to the eukaryotic ribosomal protein eL18 family. Part of the 50S ribosomal subunit. Interacts weakly with proteins L4 and L15. Has been cross-linked to L4.

In terms of biological role, stabilizes the tertiary rRNA structure within the 23S rRNA domain (domain II) to which it binds. This chain is Large ribosomal subunit protein eL18 (rpl18e), found in Haloarcula marismortui (strain ATCC 43049 / DSM 3752 / JCM 8966 / VKM B-1809) (Halobacterium marismortui).